We begin with the raw amino-acid sequence, 532 residues long: Chondroitin sulfate N-acetylgalactosaminyltransferase 1 (532 aa).

Residues 1-14 lie on the Cytoplasmic side of the membrane; sequence MMMVRRGLLAWISR. A helical; Signal-anchor for type II membrane protein membrane pass occupies residues 15-35; it reads VVVLLVLLCCAISVLYMLACT. Residues 36-532 lie on the Lumenal side of the membrane; that stretch reads PKGDEEQLAL…QKQKTSSKKT (497 aa). A coiled-coil region spans residues 57–100; sequence YQAVLQEWEEQHRNYVSSLKRQIAQLKEELQERSEQLRNGQYQA. N-linked (GlcNAc...) asparagine glycosylation is found at Asn-315 and Asn-324. A divalent metal cation contacts are provided by Asp-360 and His-477.

It belongs to the chondroitin N-acetylgalactosaminyltransferase family. In terms of processing, N-glycosylated. Ubiquitous, with the highest levels in placenta, thyroid, bladder, prostate and adrenal gland. Detected at low levels in the other tissues examined.

It is found in the golgi apparatus. It localises to the golgi stack membrane. The enzyme catalyses 3-O-(beta-D-GlcA-(1-&gt;3)-beta-D-Gal-(1-&gt;3)-beta-D-Gal-(1-&gt;4)-beta-D-Xyl)-L-seryl-[protein] + UDP-N-acetyl-alpha-D-galactosamine = 3-O-(beta-D-GalNAc-(1-&gt;4)-beta-D-GlcA-(1-&gt;3)-beta-D-Gal-(1-&gt;3)-beta-D-Gal-(1-&gt;4)-beta-D-Xyl)-L-seryl-[protein] + UDP + H(+). In terms of biological role, transfers 1,4-N-acetylgalactosamine (GalNAc) from UDP-GalNAc to the non-reducing end of glucuronic acid (GlcUA). Required for addition of the first GalNAc to the core tetrasaccharide linker and for elongation of chondroitin chains. Important role in chondroitin chain biosynthesis in cartilage formation and subsequent endochondral ossification. Moreover, is involved in the metabolism of aggrecan. The protein is Chondroitin sulfate N-acetylgalactosaminyltransferase 1 of Homo sapiens (Human).